We begin with the raw amino-acid sequence, 276 residues long: MRSELSVTSSIFEANRARGAVRFDVHARDGVTRRGVLHESGSLRVRFPSPEDEGLSGVFVNTAGGVAGGDRFDVEISAADAARLTLTTAAAEKVYRAPGPAAELNIALKVGAGAHLSWLPQETILFDRARVHRRFDIALDEAASLLLCEIVVFGRTAMGERMEQGEFVDRWRLSRGGRLVFAETVRLGGDIGAKLARSAVAKGGAAIGTALIVPGDEALIERIREASESFAGEVGISAWNGFAMARFCAQDAARLRADMMAVLARTGAALPRLWLN.

This sequence belongs to the UreD family. UreD, UreF and UreG form a complex that acts as a GTP-hydrolysis-dependent molecular chaperone, activating the urease apoprotein by helping to assemble the nickel containing metallocenter of UreC. The UreE protein probably delivers the nickel.

The protein localises to the cytoplasm. In terms of biological role, required for maturation of urease via the functional incorporation of the urease nickel metallocenter. The protein is Urease accessory protein UreD of Bradyrhizobium diazoefficiens (strain JCM 10833 / BCRC 13528 / IAM 13628 / NBRC 14792 / USDA 110).